A 504-amino-acid chain; its full sequence is MXXXXGYLEFDGARQQSFLYPFFFREYIYVLAYDHRLNRLNRNRSIFLENADFDKNYSSLIVKRLILRMYEQNRLIIPTKDLNQNPFFGHTNLFYYQMISVLFAVIVEIQFSLRLGSSFEGKQLKKSYNLQSIHSIFPFLEDKLTHFNYVLDVLIPYPIHLEILVQTLRYRVKDASSLHFFRFCLYEYCNWNNLDIKKKSILNPIFFLFLYNSHVCEYESIFFFLRKRSSHLRSTSYKVLFERIFFYGKIQHFLKVFVNNFPASLGLLKDPFLHYVXYHGKFILATKDTPLLMNKWKYYFVNLWQCYFSVWFQSQKVNINQLSKDNLDFLGYLSSLRLNPLVVRSQMLENSFLIDNVRIKLDSKIPISSIIGSLAKDKFCNVLGHPISKATWTDSSDSYILNRFVRICRNISHYYSGSEKKKNLYRIKYILRLCCVKTLARKHKSTVRAFLKRLGSGLLEEFLTGEGQVLSLIFPRSYYASKRLYRVRIWYLDILYLNDLVNHE.

This sequence belongs to the intron maturase 2 family. MatK subfamily.

Its subcellular location is the plastid. The protein resides in the chloroplast. Usually encoded in the trnK tRNA gene intron. Probably assists in splicing its own and other chloroplast group II introns. This Alliaria petiolata (Garlic mustard) protein is Maturase K.